A 344-amino-acid chain; its full sequence is L-rhamnose-proton symporter (344 aa).

10 helical membrane passes run 4–24 (AITM…CFYA), 38–58 (WSVG…ALLL), 68–88 (FNLS…IGNI), 101–121 (MGIG…TPII), 137–157 (TLLG…AGQL), 175–195 (LLLA…MNAA), 214–234 (LPSY…FCFI), 259–279 (ILLS…YAWG), 290–310 (MSWM…GLVL), and 321–341 (VAVL…VGLG).

This sequence belongs to the L-rhamnose transporter (TC 2.A.7.6) family.

Its subcellular location is the cell inner membrane. The enzyme catalyses L-rhamnopyranose(in) + H(+)(in) = L-rhamnopyranose(out) + H(+)(out). Its function is as follows. Uptake of L-rhamnose across the cytoplasmic membrane with the concomitant transport of protons into the cell (symport system). The protein is L-rhamnose-proton symporter of Salmonella dublin (strain CT_02021853).